The primary structure comprises 193 residues: dCTP deaminase (193 aa).

DCTP is bound by residues 110–115 (RSSLAR), aspartate 128, 136–138 (VLE), tyrosine 171, lysine 178, and glutamine 182. Glutamate 138 acts as the Proton donor/acceptor in catalysis. Positions 170–193 (PYNSRQDAKYRGQQGAVASRIDKD) are disordered.

It belongs to the dCTP deaminase family. Homotrimer.

The catalysed reaction is dCTP + H2O + H(+) = dUTP + NH4(+). The protein operates within pyrimidine metabolism; dUMP biosynthesis; dUMP from dCTP (dUTP route): step 1/2. In terms of biological role, catalyzes the deamination of dCTP to dUTP. The protein is dCTP deaminase of Yersinia enterocolitica serotype O:8 / biotype 1B (strain NCTC 13174 / 8081).